A 361-amino-acid chain; its full sequence is Phosphoserine aminotransferase (361 aa).

Arg42 serves as a coordination point for L-glutamate. Pyridoxal 5'-phosphate is bound by residues 76–77, Trp102, Thr152, Asp172, and Gln195; that span reads AT. Lys196 carries the post-translational modification N6-(pyridoxal phosphate)lysine. Pyridoxal 5'-phosphate is bound at residue 237-238; sequence NT.

It belongs to the class-V pyridoxal-phosphate-dependent aminotransferase family. SerC subfamily. Homodimer. Pyridoxal 5'-phosphate serves as cofactor.

The protein resides in the cytoplasm. The enzyme catalyses O-phospho-L-serine + 2-oxoglutarate = 3-phosphooxypyruvate + L-glutamate. The catalysed reaction is 4-(phosphooxy)-L-threonine + 2-oxoglutarate = (R)-3-hydroxy-2-oxo-4-phosphooxybutanoate + L-glutamate. The protein operates within amino-acid biosynthesis; L-serine biosynthesis; L-serine from 3-phospho-D-glycerate: step 2/3. Its pathway is cofactor biosynthesis; pyridoxine 5'-phosphate biosynthesis; pyridoxine 5'-phosphate from D-erythrose 4-phosphate: step 3/5. Functionally, catalyzes the reversible conversion of 3-phosphohydroxypyruvate to phosphoserine and of 3-hydroxy-2-oxo-4-phosphonooxybutanoate to phosphohydroxythreonine. The protein is Phosphoserine aminotransferase of Xanthomonas axonopodis pv. citri (strain 306).